A 286-amino-acid polypeptide reads, in one-letter code: MTAQNIDGTLISQTVRSEVAARVKARVEAGLRAPGLAVVLVGEDPASQVYVGSKRRACEEVGFVSKSFDLPATTSEEELLALIDELNNDAEIDGILVQLPLPAGIDATHVLERIHPEKDVDGFHPYNVGRLAQRIPKLRSCTPKGIITLLDRYNIELRGKHAVVVGASNIVGRPMTLELLLAGCTTTTCHRFTKDLEGHVRQADLVVVAVGKPNFIPGEWIKKGAVVVDVGINRLESGKLVGDVEYDKARENASFITPVPGGVGPMTVASLIENTMLACEQFHTKK.

Residues 166–168 (GAS) and Ile232 contribute to the NADP(+) site.

Belongs to the tetrahydrofolate dehydrogenase/cyclohydrolase family. In terms of assembly, homodimer.

The enzyme catalyses (6R)-5,10-methylene-5,6,7,8-tetrahydrofolate + NADP(+) = (6R)-5,10-methenyltetrahydrofolate + NADPH. The catalysed reaction is (6R)-5,10-methenyltetrahydrofolate + H2O = (6R)-10-formyltetrahydrofolate + H(+). It functions in the pathway one-carbon metabolism; tetrahydrofolate interconversion. In terms of biological role, catalyzes the oxidation of 5,10-methylenetetrahydrofolate to 5,10-methenyltetrahydrofolate and then the hydrolysis of 5,10-methenyltetrahydrofolate to 10-formyltetrahydrofolate. The polypeptide is Bifunctional protein FolD (Vibrio campbellii (strain ATCC BAA-1116)).